The primary structure comprises 97 residues: Large ribosomal subunit protein bL28 (97 aa).

This sequence belongs to the bacterial ribosomal protein bL28 family.

The protein is Large ribosomal subunit protein bL28 of Rickettsia bellii (strain OSU 85-389).